The following is a 362-amino-acid chain: Phosphoserine aminotransferase (362 aa).

Arg43 contacts L-glutamate. Residues 77–78 (AT), Trp103, Thr153, Asp173, and Gln196 contribute to the pyridoxal 5'-phosphate site. Lys197 bears the N6-(pyridoxal phosphate)lysine mark. 238 to 239 (NT) serves as a coordination point for pyridoxal 5'-phosphate.

It belongs to the class-V pyridoxal-phosphate-dependent aminotransferase family. SerC subfamily. As to quaternary structure, homodimer. The cofactor is pyridoxal 5'-phosphate.

The protein resides in the cytoplasm. The catalysed reaction is O-phospho-L-serine + 2-oxoglutarate = 3-phosphooxypyruvate + L-glutamate. It carries out the reaction 4-(phosphooxy)-L-threonine + 2-oxoglutarate = (R)-3-hydroxy-2-oxo-4-phosphooxybutanoate + L-glutamate. It participates in amino-acid biosynthesis; L-serine biosynthesis; L-serine from 3-phospho-D-glycerate: step 2/3. Its pathway is cofactor biosynthesis; pyridoxine 5'-phosphate biosynthesis; pyridoxine 5'-phosphate from D-erythrose 4-phosphate: step 3/5. Functionally, catalyzes the reversible conversion of 3-phosphohydroxypyruvate to phosphoserine and of 3-hydroxy-2-oxo-4-phosphonooxybutanoate to phosphohydroxythreonine. The protein is Phosphoserine aminotransferase of Acidithiobacillus ferrooxidans (strain ATCC 23270 / DSM 14882 / CIP 104768 / NCIMB 8455) (Ferrobacillus ferrooxidans (strain ATCC 23270)).